A 394-amino-acid chain; its full sequence is Na(+)/H(+) antiporter NhaA (394 aa).

A run of 11 helical transmembrane segments spans residues 11 to 31 (LEAASGILLLVSALLAMIFAN), 59 to 79 (LLMWVNDGFMAVFFILVGMEV), 95 to 115 (IFPAVAALGGMIIPALVYWFI), 125 to 145 (GWAIPMATDIAFALGIVALLS), 155 to 175 (FLLALAIIDDLGAIIVIALFF), 177 to 197 (HEMSMQALTIASIAIVILVAM), 203 to 220 (TGLINYAIIGTILWASVL), 254 to 274 (ALAPWCSFAILPLFAFSNAGV), 296 to 316 (LIIGKPVGVFLFSYVAVLLGI), 328 to 348 (IFAIAVLCGIGFTMSMFIAGL), and 365 to 385 (LGILMGTFVAAIIGYFLLKIT).

The protein belongs to the NhaA Na(+)/H(+) (TC 2.A.33) antiporter family.

It is found in the cell inner membrane. The catalysed reaction is Na(+)(in) + 2 H(+)(out) = Na(+)(out) + 2 H(+)(in). Functionally, na(+)/H(+) antiporter that extrudes sodium in exchange for external protons. This chain is Na(+)/H(+) antiporter NhaA, found in Actinobacillus pleuropneumoniae serotype 7 (strain AP76).